The primary structure comprises 514 residues: Na(+)/H(+) antiporter NhaB (514 aa).

Helical transmembrane passes span 23–43, 63–83, 97–117, 120–140, 144–164, 202–222, 238–258, 303–323, 357–377, 391–411, 447–467, and 475–495; these read LALL…PFIA, PLLP…TSAA, LLLM…LFIF, LLLS…AAAF, FLDA…FYGI, LMMH…VGEP, FFLR…LTCM, AIIG…VGLI, LTVF…APII, LFYL…VGTI, ATPN…APLI, and VWMA…CVEF.

It belongs to the NhaB Na(+)/H(+) (TC 2.A.34) antiporter family.

The protein localises to the cell inner membrane. It carries out the reaction 2 Na(+)(in) + 3 H(+)(out) = 2 Na(+)(out) + 3 H(+)(in). Na(+)/H(+) antiporter that extrudes sodium in exchange for external protons. In Salmonella heidelberg (strain SL476), this protein is Na(+)/H(+) antiporter NhaB.